The following is a 250-amino-acid chain: Probable replication-associated protein repA2 (250 aa).

This sequence belongs to the IncFII RepA family.

Functionally, this protein is essential for plasmid replication; it is involved in copy control functions. This chain is Probable replication-associated protein repA2 (repA2), found in Buchnera aphidicola subsp. Schizaphis graminum (strain Sg).